A 103-amino-acid polypeptide reads, in one-letter code: UPF0473 protein LBA0420 (103 aa).

It belongs to the UPF0473 family.

The protein is UPF0473 protein LBA0420 of Lactobacillus acidophilus (strain ATCC 700396 / NCK56 / N2 / NCFM).